The following is a 444-amino-acid chain: MRQRMSRMPSSFYIHTFGCQMNQADSEIVTALLRAEGFVPSADETNADIVLLNSCAVRENAEERLGNILMHLKGRKRRCKELVIGVLGCVPQFERERVFSDYPFVDFIVGPDNYRELAGLVAGLREAVARPALLDYDQTETYAGIEPVRAGSISAFLPVMRGCNNHCAFCVVPVTRGRERSVGFERVVAEVVALEKAGFREVTLLGQNVNSWRDAEKGLDFAGLLEGVSLAVPSMRIRFTTSHPKDISEALVKVIAARPNLCNHIHLPVQSGSSRMLDLMKRGHTREEYLDRIAMIRSYIPEVAITTDLIAGFCTETEKDHRETLSLMEAVGYDTAFMFHYSVRPGTWAARNLPDDVPDTVKKARLQEIIELQNAISREIFQREIGKTVEVLAEAESKRSESMLMGRTPENRVVVFSRGRFNPSDTLLVKITGATSATLSGEAV.

Residues 10 to 126 (SSFYIHTFGC…LAGLVAGLRE (117 aa)) form the MTTase N-terminal domain. [4Fe-4S] cluster contacts are provided by Cys-19, Cys-55, Cys-89, Cys-163, Cys-167, and Cys-170. Residues 149–379 (RAGSISAFLP…IELQNAISRE (231 aa)) form the Radical SAM core domain. The TRAM domain maps to 382 to 444 (QREIGKTVEV…TSATLSGEAV (63 aa)).

This sequence belongs to the methylthiotransferase family. MiaB subfamily. In terms of assembly, monomer. [4Fe-4S] cluster serves as cofactor.

It is found in the cytoplasm. The enzyme catalyses N(6)-dimethylallyladenosine(37) in tRNA + (sulfur carrier)-SH + AH2 + 2 S-adenosyl-L-methionine = 2-methylsulfanyl-N(6)-dimethylallyladenosine(37) in tRNA + (sulfur carrier)-H + 5'-deoxyadenosine + L-methionine + A + S-adenosyl-L-homocysteine + 2 H(+). Functionally, catalyzes the methylthiolation of N6-(dimethylallyl)adenosine (i(6)A), leading to the formation of 2-methylthio-N6-(dimethylallyl)adenosine (ms(2)i(6)A) at position 37 in tRNAs that read codons beginning with uridine. In Chlorobaculum tepidum (strain ATCC 49652 / DSM 12025 / NBRC 103806 / TLS) (Chlorobium tepidum), this protein is tRNA-2-methylthio-N(6)-dimethylallyladenosine synthase.